The sequence spans 315 residues: Probable cell division protein WhiA (315 aa).

A DNA-binding region (H-T-H motif) is located at residues 274–308; the sequence is SLKNLGELIPGGPISKSGINHRLRKLNEIAEKIRA.

Belongs to the WhiA family.

Its function is as follows. Involved in cell division and chromosome segregation. The polypeptide is Probable cell division protein WhiA (Ligilactobacillus salivarius (strain UCC118) (Lactobacillus salivarius)).